The chain runs to 156 residues: ATP synthase subunit b (156 aa).

The helical transmembrane segment at Ile3 to Thr23 threads the bilayer.

The protein belongs to the ATPase B chain family. F-type ATPases have 2 components, F(1) - the catalytic core - and F(0) - the membrane proton channel. F(1) has five subunits: alpha(3), beta(3), gamma(1), delta(1), epsilon(1). F(0) has three main subunits: a(1), b(2) and c(10-14). The alpha and beta chains form an alternating ring which encloses part of the gamma chain. F(1) is attached to F(0) by a central stalk formed by the gamma and epsilon chains, while a peripheral stalk is formed by the delta and b chains.

It localises to the cell inner membrane. F(1)F(0) ATP synthase produces ATP from ADP in the presence of a proton or sodium gradient. F-type ATPases consist of two structural domains, F(1) containing the extramembraneous catalytic core and F(0) containing the membrane proton channel, linked together by a central stalk and a peripheral stalk. During catalysis, ATP synthesis in the catalytic domain of F(1) is coupled via a rotary mechanism of the central stalk subunits to proton translocation. Functionally, component of the F(0) channel, it forms part of the peripheral stalk, linking F(1) to F(0). The chain is ATP synthase subunit b from Xanthomonas axonopodis pv. citri (strain 306).